A 93-amino-acid chain; its full sequence is Large ribosomal subunit protein bL27 (93 aa).

Residues 1 to 22 (MAHKKAGGSSRNGRDSAGRRLG) form a disordered region.

The protein belongs to the bacterial ribosomal protein bL27 family.

The protein is Large ribosomal subunit protein bL27 of Parvibaculum lavamentivorans (strain DS-1 / DSM 13023 / NCIMB 13966).